The sequence spans 214 residues: Octanoyltransferase (214 aa).

The region spanning 28 to 210 is the BPL/LPL catalytic domain; it reads GTAEDALYLL…EFGKVFTDTA (183 aa). Residues 73–80, 140–142, and 153–155 contribute to the substrate site; these read RGGNITCH, SIG, and GLS. C171 serves as the catalytic Acyl-thioester intermediate.

Belongs to the LipB family.

It is found in the cytoplasm. It carries out the reaction octanoyl-[ACP] + L-lysyl-[protein] = N(6)-octanoyl-L-lysyl-[protein] + holo-[ACP] + H(+). It participates in protein modification; protein lipoylation via endogenous pathway; protein N(6)-(lipoyl)lysine from octanoyl-[acyl-carrier-protein]: step 1/2. Functionally, catalyzes the transfer of endogenously produced octanoic acid from octanoyl-acyl-carrier-protein onto the lipoyl domains of lipoate-dependent enzymes. Lipoyl-ACP can also act as a substrate although octanoyl-ACP is likely to be the physiological substrate. The polypeptide is Octanoyltransferase (Maridesulfovibrio salexigens (strain ATCC 14822 / DSM 2638 / NCIMB 8403 / VKM B-1763) (Desulfovibrio salexigens)).